The following is a 185-amino-acid chain: Peptidyl-tRNA hydrolase (185 aa).

Tyr14 is a tRNA binding site. His19 serves as the catalytic Proton acceptor. Residues Phe64, Asn66, and Asn112 each contribute to the tRNA site.

It belongs to the PTH family. In terms of assembly, monomer.

The protein localises to the cytoplasm. The catalysed reaction is an N-acyl-L-alpha-aminoacyl-tRNA + H2O = an N-acyl-L-amino acid + a tRNA + H(+). Functionally, hydrolyzes ribosome-free peptidyl-tRNAs (with 1 or more amino acids incorporated), which drop off the ribosome during protein synthesis, or as a result of ribosome stalling. In terms of biological role, catalyzes the release of premature peptidyl moieties from peptidyl-tRNA molecules trapped in stalled 50S ribosomal subunits, and thus maintains levels of free tRNAs and 50S ribosomes. The chain is Peptidyl-tRNA hydrolase from Lactobacillus gasseri (strain ATCC 33323 / DSM 20243 / BCRC 14619 / CIP 102991 / JCM 1131 / KCTC 3163 / NCIMB 11718 / NCTC 13722 / AM63).